Consider the following 202-residue polypeptide: Small ribosomal subunit protein uS4 (202 aa).

The region spanning 94-157 is the S4 RNA-binding domain; the sequence is SRLDNLVYRM…KDLPIVAAGA (64 aa).

It belongs to the universal ribosomal protein uS4 family. As to quaternary structure, part of the 30S ribosomal subunit. Contacts protein S5. The interaction surface between S4 and S5 is involved in control of translational fidelity.

Its function is as follows. One of the primary rRNA binding proteins, it binds directly to 16S rRNA where it nucleates assembly of the body of the 30S subunit. Functionally, with S5 and S12 plays an important role in translational accuracy. The sequence is that of Small ribosomal subunit protein uS4 from Malacoplasma penetrans (strain HF-2) (Mycoplasma penetrans).